The chain runs to 55 residues: Large ribosomal subunit protein bL33 (55 aa).

The protein belongs to the bacterial ribosomal protein bL33 family.

In Deinococcus deserti (strain DSM 17065 / CIP 109153 / LMG 22923 / VCD115), this protein is Large ribosomal subunit protein bL33.